The primary structure comprises 119 residues: Large ribosomal subunit protein bL20 (119 aa).

The protein belongs to the bacterial ribosomal protein bL20 family.

Functionally, binds directly to 23S ribosomal RNA and is necessary for the in vitro assembly process of the 50S ribosomal subunit. It is not involved in the protein synthesizing functions of that subunit. The protein is Large ribosomal subunit protein bL20 of Stenotrophomonas maltophilia (strain K279a).